Consider the following 249-residue polypeptide: General transcription factor IIF subunit 2 (249 aa).

An N-acetylalanine modification is found at Ala2. An N6-acetyllysine mark is found at Lys22, Lys33, and Lys137. Ser142 carries the post-translational modification Phosphoserine. DNA-binding residues include Gly227 and His229. Position 248 is a phosphoserine (Ser248).

It belongs to the TFIIF beta subunit family. In terms of assembly, heterodimer of an alpha and a beta subunit. Interacts with HTATSF1 and GPBP1. Interacts with URI1. Interacts with GTF2B (via N-terminus); this interaction is inhibited in presence of GTF2F1. Part of TBP-based Pol II pre-initiation complex (PIC), in which Pol II core assembles with general transcription factors and other specific initiation factors including GTF2E1, GTF2E2, GTF2F1, GTF2F2, TCEA1, ERCC2, ERCC3, GTF2H2, GTF2H3, GTF2H4, GTF2H5, GTF2A1, GTF2A2, GTF2B and TBP; this large multi-subunit PIC complex mediates DNA unwinding and targets Pol II core to the transcription start site where the first phosphodiester bond forms.

The protein localises to the nucleus. TFIIF is a general transcription initiation factor that binds to RNA polymerase II and helps to recruit it to the initiation complex in collaboration with TFIIB. It promotes transcription elongation. The protein is General transcription factor IIF subunit 2 (Gtf2f2) of Rattus norvegicus (Rat).